Reading from the N-terminus, the 248-residue chain is Triosephosphate isomerase (248 aa).

2 residues coordinate substrate: N10 and K12. The active-site Electrophile is the H95. The active-site Proton acceptor is E165.

It belongs to the triosephosphate isomerase family. As to quaternary structure, homodimer.

It carries out the reaction D-glyceraldehyde 3-phosphate = dihydroxyacetone phosphate. It participates in carbohydrate biosynthesis; gluconeogenesis. Its pathway is carbohydrate degradation; glycolysis; D-glyceraldehyde 3-phosphate from glycerone phosphate: step 1/1. The sequence is that of Triosephosphate isomerase (TPI1) from Debaryomyces hansenii (strain ATCC 36239 / CBS 767 / BCRC 21394 / JCM 1990 / NBRC 0083 / IGC 2968) (Yeast).